Reading from the N-terminus, the 85-residue chain is SPbeta prophage-derived uncharacterized protein YoqG (85 aa).

In Bacillus subtilis (strain 168), this protein is SPbeta prophage-derived uncharacterized protein YoqG (yoqG).